Reading from the N-terminus, the 488-residue chain is Proline--tRNA ligase (488 aa).

It belongs to the class-II aminoacyl-tRNA synthetase family. ProS type 3 subfamily. In terms of assembly, homodimer.

It localises to the cytoplasm. The enzyme catalyses tRNA(Pro) + L-proline + ATP = L-prolyl-tRNA(Pro) + AMP + diphosphate. Its function is as follows. Catalyzes the attachment of proline to tRNA(Pro) in a two-step reaction: proline is first activated by ATP to form Pro-AMP and then transferred to the acceptor end of tRNA(Pro). This chain is Proline--tRNA ligase, found in Pyrobaculum aerophilum (strain ATCC 51768 / DSM 7523 / JCM 9630 / CIP 104966 / NBRC 100827 / IM2).